A 391-amino-acid polypeptide reads, in one-letter code: Probable protein arginine N-methyltransferase 6.1 (391 aa).

A disordered region spans residues 1-35 (MLPSHLNGHSPLARRCPRLSAASPPATGDSDAAAA). Residues 20-35 (SAASPPATGDSDAAAA) are compositionally biased toward low complexity. Residues 45 to 391 (DRIYFQSYSH…QTLVKDYAMR (347 aa)) enclose the SAM-dependent MTase PRMT-type domain. Positions 58, 67, 91, 113, and 142 each coordinate S-adenosyl-L-methionine. Catalysis depends on residues Glu-156 and Glu-165.

Belongs to the class I-like SAM-binding methyltransferase superfamily. Protein arginine N-methyltransferase family. PRMT6 subfamily.

Its function is as follows. Arginine methyltransferase that can both catalyze the formation of omega-N monomethylarginine (MMA) and asymmetrical dimethylarginine (aDMA). The sequence is that of Probable protein arginine N-methyltransferase 6.1 (PRMT6.1) from Oryza sativa subsp. japonica (Rice).